A 470-amino-acid chain; its full sequence is ATP synthase subunit beta (470 aa).

Position 157–164 (G157–T164) interacts with ATP.

This sequence belongs to the ATPase alpha/beta chains family. F-type ATPases have 2 components, CF(1) - the catalytic core - and CF(0) - the membrane proton channel. CF(1) has five subunits: alpha(3), beta(3), gamma(1), delta(1), epsilon(1). CF(0) has three main subunits: a(1), b(2) and c(9-12). The alpha and beta chains form an alternating ring which encloses part of the gamma chain. CF(1) is attached to CF(0) by a central stalk formed by the gamma and epsilon chains, while a peripheral stalk is formed by the delta and b chains.

The protein localises to the cell inner membrane. It carries out the reaction ATP + H2O + 4 H(+)(in) = ADP + phosphate + 5 H(+)(out). Its function is as follows. Produces ATP from ADP in the presence of a proton gradient across the membrane. The catalytic sites are hosted primarily by the beta subunits. This Geotalea daltonii (strain DSM 22248 / JCM 15807 / FRC-32) (Geobacter daltonii) protein is ATP synthase subunit beta.